The primary structure comprises 887 residues: 3-hydroxy-3-methylglutaryl-coenzyme A reductase (887 aa).

Residues 1–9 (MLSRLFRMH) are Cytoplasmic-facing. A helical membrane pass occupies residues 10 to 39 (GLFVASHPWEVIVGTVTLTICMMSMNMFTG). The Lumenal segment spans residues 40 to 56 (NNKICGWNYECPKFEED). Residues 57–78 (VLSSDIIILTITRCIAILYIYF) form a helical membrane-spanning segment. An SSD domain is found at 61–218 (DIIILTITRC…MTFFPACVSL (158 aa)). Residues 75-78 (YIYF) carry the INSIG-binding motif motif. The Cytoplasmic portion of the chain corresponds to 79–89 (QFQNLRQLGSK). Residue lysine 89 forms a Glycyl lysine isopeptide (Lys-Gly) (interchain with G-Cter in ubiquitin) linkage. Residues 90-114 (YILGIAGLFTIFSSFVFSTVVIHFL) traverse the membrane as a helical segment. Over 115–123 (DKELTGLNE) the chain is Lumenal. Residues 124 to 149 (ALPFFLLLIDLSRASALAKFALSSNS) traverse the membrane as a helical segment. Residues 150 to 159 (QDEVRENIAR) lie on the Cytoplasmic side of the membrane. The helical transmembrane segment at 160-187 (GMAILGPTFTLDALVECLVIGVGTMSGV) threads the bilayer. Over 188–191 (RQLE) the chain is Lumenal. Residues 192–220 (IMCCFGCMSVLANYFVFMTFFPACVSLVL) form a helical membrane-spanning segment. At 221 to 248 (ELSRESREGRPIWQLSHFARVLEEEENK) the chain is on the cytoplasmic side. A Glycyl lysine isopeptide (Lys-Gly) (interchain with G-Cter in ubiquitin) cross-link involves residue lysine 248. The chain crosses the membrane as a helical span at residues 249–275 (PNPVTQRVKMIMSLGLVLVHAHSRWIA). At 276–314 (DPSPQNSTAEQSKVSLGLAEDVSKRIEPSVSLWQFYLSK) the chain is on the lumenal side. The N-linked (GlcNAc...) asparagine glycan is linked to asparagine 281. A helical transmembrane segment spans residues 315–339 (MISMDIEQVITLSLALLLAVKYIFF). The Cytoplasmic segment spans residues 340-887 (EQAETESTLS…LQGTCTKKAA (548 aa)). Active-site charge relay system residues include glutamate 558, lysine 690, and aspartate 766. Catalysis depends on histidine 865, which acts as the Proton donor. Serine 871 carries the phosphoserine; by AMPK modification.

It belongs to the HMG-CoA reductase family. Homotetramer. Homodimer. Interacts (via its SSD) with INSIG1; the interaction, accelerated by sterols, leads to the recruitment of HMGCR to AMFR/gp78 for its ubiquitination by the sterol-mediated ERAD pathway. Interacts with UBIAD1. Undergoes sterol-mediated ubiquitination and ER-associated degradation (ERAD). Accumulation of sterols in the endoplasmic reticulum (ER) membrane, triggers binding of the reductase to the ER membrane protein INSIG1 or INSIG2. The INSIG1 binding leads to the recruitment of the ubiquitin ligase, AMFR/gp78, RNF139 or RNF145, initiating ubiquitination of the reductase. The ubiquitinated reductase is then extracted from the ER membrane and delivered to cytosolic 26S proteosomes by a mechanism probably mediated by the ATPase Valosin-containing protein VCP/p97. The INSIG2-binding leads to the recruitment of the ubiquitin ligase RNF139, initiating ubiquitination of the reductase. Lys-248 is the main site of ubiquitination. Ubiquitination is enhanced by the presence of a geranylgeranylated protein. Post-translationally, N-glycosylated. Deglycosylated by NGLY1 on release from the endoplasmic reticulum (ER) in a sterol-mediated manner. In terms of processing, phosphorylated. Phosphorylation at Ser-871 reduces the catalytic activity.

It is found in the endoplasmic reticulum membrane. The protein resides in the peroxisome membrane. It catalyses the reaction (R)-mevalonate + 2 NADP(+) + CoA = (3S)-3-hydroxy-3-methylglutaryl-CoA + 2 NADPH + 2 H(+). It functions in the pathway metabolic intermediate biosynthesis; (R)-mevalonate biosynthesis; (R)-mevalonate from acetyl-CoA: step 3/3. Its activity is regulated as follows. Regulated by a negative feedback mechanism through sterols and non-sterol metabolites derived from mevalonate. Phosphorylation at Ser-871 down-regulates the catalytic activity. Its function is as follows. Catalyzes the conversion of (3S)-hydroxy-3-methylglutaryl-CoA (HMG-CoA) to mevalonic acid, the rate-limiting step in the synthesis of cholesterol and other isoprenoids, thus plays a critical role in cellular cholesterol homeostasis. This chain is 3-hydroxy-3-methylglutaryl-coenzyme A reductase (Hmgcr), found in Rattus norvegicus (Rat).